The chain runs to 323 residues: Putative gluconeogenesis factor (323 aa).

This sequence belongs to the gluconeogenesis factor family.

It localises to the cytoplasm. Functionally, required for morphogenesis under gluconeogenic growth conditions. This Thermoanaerobacterium thermosulfurigenes (Clostridium thermosulfurogenes) protein is Putative gluconeogenesis factor.